Reading from the N-terminus, the 89-residue chain is Small ribosomal subunit protein uS14 (89 aa).

The protein belongs to the universal ribosomal protein uS14 family. In terms of assembly, part of the 30S ribosomal subunit. Contacts proteins S3 and S10.

Its function is as follows. Binds 16S rRNA, required for the assembly of 30S particles and may also be responsible for determining the conformation of the 16S rRNA at the A site. The protein is Small ribosomal subunit protein uS14 of Chloroherpeton thalassium (strain ATCC 35110 / GB-78).